The chain runs to 230 residues: Pyridoxal phosphate homeostasis protein (230 aa).

The residue at position 36 (Lys-36) is an N6-(pyridoxal phosphate)lysine.

Belongs to the pyridoxal phosphate-binding protein YggS/PROSC family.

Functionally, perhaps involved in proline biosynthesis. Pyridoxal 5'-phosphate (PLP)-binding protein, which is involved in PLP homeostasis. This chain is Pyridoxal phosphate homeostasis protein, found in Pseudomonas aeruginosa (strain ATCC 15692 / DSM 22644 / CIP 104116 / JCM 14847 / LMG 12228 / 1C / PRS 101 / PAO1).